The following is a 1052-amino-acid chain: Malignant fibrous histiocytoma-amplified sequence 1 (1052 aa).

The residue at position 2 (A2) is an N-acetylalanine. 13 LRR repeats span residues 64 to 85 (DIEALNLGNNGLEEVPEGLGSA), 88 to 109 (SLRVLVLRRNRFARLPPAVAEL), 112 to 133 (HLTELDVSHNRLTALGAEVVSA), 136 to 157 (ELRKLNLSHNQLPALPAQLGAL), 159 to 180 (HLEELDVSFNRLAHLPDSLSCL), 182 to 203 (RLRTLDVDHNQLTAFPRQLLQL), 205 to 226 (ALEELDVSSNRLRGLPEDISAL), 228 to 249 (ALKILWLSGAELGTLPAGFCEL), 251 to 272 (SLESLMLDNNGLQALPAQFSCL), 274 to 296 (RLKMLNLSSNLFEEFPAALLPLA), 297 to 318 (GLEELYLSRNQLTSVPSLISGL), 320 to 341 (RLLTLWLDNNRIRYLPDSIVEL), and 343 to 364 (GLEELVLQGNQIAVLPDHFGQL). The interval 64-364 (DIEALNLGNN…AVLPDHFGQL (301 aa)) is required for interaction with PJA2. Residues 64–649 (DIEALNLGNN…DKLLSVAEHR (586 aa)) form a required for interaction with PPP2R2A region. Residues 403 to 649 (QPAVQPRLKL…DKLLSVAEHR (247 aa)) form the Roc domain. The residue at position 601 (K601) is an N6-acetyllysine.

In terms of assembly, interacts with RAF1. Interacts with HSPD1. Interacts with PPP2CA; retains PPP2CA into the cytoplasm and excludes it from the nucleus. Interacts with PPP2R2A; the interaction is direct. Interacts with PJA2. Ubiquitinated. Ubiquitination by PJA2 does not lead MFHAS1 to proteasomal degradation but positively regulates its function in polarization of macrophages. As to expression, ubiquitously expressed. Overexpressed in malignant fibrous histiocytomas. Expressed in red blood cells (at protein level).

It localises to the cytoplasm. Probable GTP-binding protein. Functions in innate immunity and more specifically the inflammatory response as a regulator of the Toll-like receptor TLR2 and TLR4 signaling pathways. Negatively regulates the part of the TLR4 signaling pathway that leads to the activation of the transcription factor AP-1. By retaining the phosphatase complex PP2A into the cytoplasm, prevents the dephosphorylation of the AP-1 subunit JUN which is required for proper activation of the transcription factor. Both inhibits and activates the TLR2-dependent signaling pathway. Positively regulates the TLR2 signaling pathway to activate specifically the downstream p38 and JNK MAP kinases and promote the polarization of macrophages toward the pro-inflammatory M1 phenotype. It may also play a role in the regulation of inflammation induced by high glucose through the PKB/AKT signaling pathway. Also involved in erythrocyte differentiation through activation of the ERK1/ERK2 signaling pathway. The polypeptide is Malignant fibrous histiocytoma-amplified sequence 1 (Homo sapiens (Human)).